The primary structure comprises 343 residues: tRNA N6-adenosine threonylcarbamoyltransferase (343 aa).

Fe cation is bound by residues H116 and H120. Residues 139–143 (TVSGG), D172, G185, D189, and N280 each bind substrate. D308 contributes to the Fe cation binding site.

This sequence belongs to the KAE1 / TsaD family. Requires Fe(2+) as cofactor.

It is found in the cytoplasm. The catalysed reaction is L-threonylcarbamoyladenylate + adenosine(37) in tRNA = N(6)-L-threonylcarbamoyladenosine(37) in tRNA + AMP + H(+). In terms of biological role, required for the formation of a threonylcarbamoyl group on adenosine at position 37 (t(6)A37) in tRNAs that read codons beginning with adenine. Is involved in the transfer of the threonylcarbamoyl moiety of threonylcarbamoyl-AMP (TC-AMP) to the N6 group of A37, together with TsaE and TsaB. TsaD likely plays a direct catalytic role in this reaction. This is tRNA N6-adenosine threonylcarbamoyltransferase from Cytophaga hutchinsonii (strain ATCC 33406 / DSM 1761 / CIP 103989 / NBRC 15051 / NCIMB 9469 / D465).